The primary structure comprises 343 residues: UDP-3-O-acylglucosamine N-acyltransferase (343 aa).

The Proton acceptor role is filled by H239.

This sequence belongs to the transferase hexapeptide repeat family. LpxD subfamily. As to quaternary structure, homotrimer.

It catalyses the reaction a UDP-3-O-[(3R)-3-hydroxyacyl]-alpha-D-glucosamine + a (3R)-hydroxyacyl-[ACP] = a UDP-2-N,3-O-bis[(3R)-3-hydroxyacyl]-alpha-D-glucosamine + holo-[ACP] + H(+). Its pathway is bacterial outer membrane biogenesis; LPS lipid A biosynthesis. Its function is as follows. Catalyzes the N-acylation of UDP-3-O-acylglucosamine using 3-hydroxyacyl-ACP as the acyl donor. Is involved in the biosynthesis of lipid A, a phosphorylated glycolipid that anchors the lipopolysaccharide to the outer membrane of the cell. The chain is UDP-3-O-acylglucosamine N-acyltransferase from Vibrio vulnificus (strain YJ016).